Consider the following 1074-residue polypeptide: Carbamoyl phosphate synthase large chain (1074 aa).

The segment at 1-399 (MPKRSDIKKV…ALMKAIRSLD (399 aa)) is carboxyphosphate synthetic domain. ATP-binding residues include R129, R169, G175, G176, E208, V210, E215, G241, I242, H243, Q284, and E296. The ATP-grasp 1 domain occupies 133 to 325 (KKAMERIGEP…IARVTAKIAI (193 aa)). The Mg(2+) site is built by Q284, E296, and N298. Residues Q284, E296, and N298 each contribute to the Mn(2+) site. Residues 400–543 (IDIDLGYNGK…YSTYDEECEL (144 aa)) are oligomerization domain. Residues 544–933 (NPSDNKKVLI…FKAEMSAENN (390 aa)) are carbamoyl phosphate synthetic domain. In terms of domain architecture, ATP-grasp 2 spans 674 to 865 (NKLLNKLGIP…LAKIAAKVMA (192 aa)). Positions 710, 749, 751, 756, 781, 782, 783, 784, 824, and 836 each coordinate ATP. Residues Q824, E836, and N838 each coordinate Mg(2+). 3 residues coordinate Mn(2+): Q824, E836, and N838. The MGS-like domain maps to 932-1074 (NNLPLDGIVF…YHREVRYRAL (143 aa)). The segment at 934–1074 (LPLDGIVFIS…YHREVRYRAL (141 aa)) is allosteric domain.

It belongs to the CarB family. Composed of two chains; the small (or glutamine) chain promotes the hydrolysis of glutamine to ammonia, which is used by the large (or ammonia) chain to synthesize carbamoyl phosphate. Tetramer of heterodimers (alpha,beta)4. Mg(2+) serves as cofactor. Mn(2+) is required as a cofactor.

The enzyme catalyses hydrogencarbonate + L-glutamine + 2 ATP + H2O = carbamoyl phosphate + L-glutamate + 2 ADP + phosphate + 2 H(+). It carries out the reaction hydrogencarbonate + NH4(+) + 2 ATP = carbamoyl phosphate + 2 ADP + phosphate + 2 H(+). The protein operates within amino-acid biosynthesis; L-arginine biosynthesis; carbamoyl phosphate from bicarbonate: step 1/1. Its pathway is pyrimidine metabolism; UMP biosynthesis via de novo pathway; (S)-dihydroorotate from bicarbonate: step 1/3. Functionally, large subunit of the glutamine-dependent carbamoyl phosphate synthetase (CPSase). CPSase catalyzes the formation of carbamoyl phosphate from the ammonia moiety of glutamine, carbonate, and phosphate donated by ATP, constituting the first step of 2 biosynthetic pathways, one leading to arginine and/or urea and the other to pyrimidine nucleotides. The large subunit (synthetase) binds the substrates ammonia (free or transferred from glutamine from the small subunit), hydrogencarbonate and ATP and carries out an ATP-coupled ligase reaction, activating hydrogencarbonate by forming carboxy phosphate which reacts with ammonia to form carbamoyl phosphate. The sequence is that of Carbamoyl phosphate synthase large chain from Methanothrix thermoacetophila (strain DSM 6194 / JCM 14653 / NBRC 101360 / PT) (Methanosaeta thermophila).